The chain runs to 291 residues: Methyl-CpG-binding domain protein 3 (291 aa).

An MBD domain is found at 1–72 (MERKRWECPA…DFRTGKMLMS (72 aa)). A required for interaction with MBD2 region spans residues 1 to 80 (MERKRWECPA…MSKMNKSRQR (80 aa)). Phosphoserine is present on Ser56. A required for interaction with MBD3L2 region spans residues 60 to 80 (STFDFRTGKMLMSKMNKSRQR). A Glycyl lysine isopeptide (Lys-Gly) (interchain with G-Cter in SUMO2) cross-link involves residue Lys73. Ser85 bears the Phosphoserine mark. Glycyl lysine isopeptide (Lys-Gly) (interchain with G-Cter in SUMO2) cross-links involve residues Lys90 and Lys92. The residue at position 144 (Ser144) is a Phosphoserine. Positions 216–245 (KAFMVTDEDIRKQEELVQQVRKRLEEALMA) form a coiled coil. Over residues 254 to 267 (LARDGEAPLDKACA) the composition is skewed to basic and acidic residues. Residues 254 to 291 (LARDGEAPLDKACAEDDDEEDEEEEEEEPDPDPEMEHV) form a disordered region. The span at 268 to 291 (EDDDEEDEEEEEEEPDPDPEMEHV) shows a compositional bias: acidic residues.

Heterodimer (via N-terminus) with MBD2. Component of the MeCP1 histone deacetylase complex. Component of the nucleosome remodeling and deacetylase (NuRD) repressor complex, composed of core proteins MTA1, MTA2, MTA3, RBBP4, RBBP7, HDAC1, HDAC2, MBD2, MBD3, and peripherally associated proteins CDK2AP1, CDK2AP2, GATAD2A, GATAD2B, CHD3, CHD4 and CHD5. The exact stoichiometry of the NuRD complex is unknown, and some subunits such as MBD2 and MBD3, GATAD2A and GATAD2B, and CHD3, CHD4 and CHD5 define mutually exclusive NuRD complexes. Interacts with MBD3L2 (via N-terminus); the interaction is direct. Interacts with BCL6. Interacts with CDK2AP1. Interacts with HDAC1. Interacts with MTA2. Interacts with DNMT1. Interacts with GATAD2A. Interacts with GATAD2B. Does not interact with PWWP2A. Does not interact with PWWP2B.

Its subcellular location is the nucleus. The protein localises to the chromosome. Its function is as follows. Acts as a component of the histone deacetylase NuRD complex which participates in the remodeling of chromatin. Acts as transcriptional repressor and plays a role in gene silencing. Does not bind to methylated DNA by itself. Binds to a lesser degree DNA containing unmethylated CpG dinucleotides. Recruits histone deacetylases and DNA methyltransferases. This chain is Methyl-CpG-binding domain protein 3 (MBD3), found in Homo sapiens (Human).